Reading from the N-terminus, the 538-residue chain is [Pyruvate dehydrogenase [acetyl-transferring]]-phosphatase 1, mitochondrial (538 aa).

The N-terminal 71 residues, 1–71, are a transit peptide targeting the mitochondrion; it reads MPAPTQLFFP…WWQYTQGRRY (71 aa). One can recognise a PPM-type phosphatase domain in the interval 109 to 525; sequence VLGFDSNQLP…DDITIIVVQF (417 aa). The Mn(2+) site is built by Asp144 and Gly145. Lys202 bears the N6-acetyllysine mark. Mn(2+) is bound by residues Asp418 and Asp516.

The protein belongs to the PP2C family. In terms of assembly, heterodimer of a catalytic (PDP1) and a regulatory (PDPR) subunit. Requires Mn(2+) as cofactor. The cofactor is Mg(2+).

It is found in the mitochondrion. It carries out the reaction O-phospho-L-seryl-[pyruvate dehydrogenase E1 alpha subunit] + H2O = L-seryl-[pyruvate dehydrogenase E1 alpha subunit] + phosphate. Magnesium-dependent and calcium-stimulated. PDP1 activity strongly depends on its Ca(2+)-dependent binding to the lipoyl domain of E2 subunit of component of the pyruvate dehydrogenase complex. Functionally, mitochondrial enzyme that catalyzes the dephosphorylation and concomitant reactivation of the alpha subunit of the E1 component of the pyruvate dehydrogenase complex (PDC), thereby stimulating the conversion of pyruvate into acetyl-CoA. The sequence is that of [Pyruvate dehydrogenase [acetyl-transferring]]-phosphatase 1, mitochondrial (PDP1) from Bos taurus (Bovine).